We begin with the raw amino-acid sequence, 73 residues long: MAKCEICGKEPRAGKNVSHSNRHTNRWFKPNVQKVRVLLDDGTVKRMNVCTSCLKAGKVRRYVSKSQSVALEA.

Belongs to the bacterial ribosomal protein bL28 family.

This Fervidobacterium nodosum (strain ATCC 35602 / DSM 5306 / Rt17-B1) protein is Large ribosomal subunit protein bL28.